The sequence spans 72 residues: Prokaryotic ubiquitin-like protein Pup (72 aa).

Positions 1 to 10 (MATKDTGGGQ) are enriched in gly residues. The interval 1–45 (MATKDTGGGQQKATRSTEEVEEQAQDAQASEDLAERQEKLSDDVD) is disordered. Positions 10–60 (QQKATRSTEEVEEQAQDAQASEDLAERQEKLSDDVDSVLDEIDDVLEENAE) form a coiled coil. Residues 28-66 (QASEDLAERQEKLSDDVDSVLDEIDDVLEENAEDFVRSF) form an ARC ATPase binding region. Residues 33–42 (LAERQEKLSD) show a composition bias toward basic and acidic residues. Gln72 carries the deamidated glutamine modification. An Isoglutamyl lysine isopeptide (Gln-Lys) (interchain with K-? in acceptor proteins) cross-link involves residue Gln72.

Belongs to the prokaryotic ubiquitin-like protein family. In terms of assembly, strongly interacts with the proteasome-associated ATPase ARC through a hydrophobic interface; the interacting region of Pup lies in its C-terminal half. There is one Pup binding site per ARC hexamer ring. Post-translationally, is modified by deamidation of its C-terminal glutamine to glutamate by the deamidase Dop, a prerequisite to the subsequent pupylation process.

It functions in the pathway protein degradation; proteasomal Pup-dependent pathway. Its function is as follows. Protein modifier that is covalently attached to lysine residues of substrate proteins, thereby targeting them for proteasomal degradation. The tagging system is termed pupylation. In Streptomyces griseus subsp. griseus (strain JCM 4626 / CBS 651.72 / NBRC 13350 / KCC S-0626 / ISP 5235), this protein is Prokaryotic ubiquitin-like protein Pup.